A 218-amino-acid polypeptide reads, in one-letter code: Phosphoglycolate phosphatase (218 aa).

Asp-7 acts as the Nucleophile in catalysis. 3 residues coordinate Mg(2+): Asp-7, Asp-9, and Asp-167.

The protein belongs to the HAD-like hydrolase superfamily. CbbY/CbbZ/Gph/YieH family. Mg(2+) serves as cofactor.

The catalysed reaction is 2-phosphoglycolate + H2O = glycolate + phosphate. Its pathway is organic acid metabolism; glycolate biosynthesis; glycolate from 2-phosphoglycolate: step 1/1. Functionally, specifically catalyzes the dephosphorylation of 2-phosphoglycolate. Is involved in the dissimilation of the intracellular 2-phosphoglycolate formed during the DNA repair of 3'-phosphoglycolate ends, a major class of DNA lesions induced by oxidative stress. This is Phosphoglycolate phosphatase from Cereibacter sphaeroides (Rhodobacter sphaeroides).